The chain runs to 156 residues: Small ribosomal subunit protein uS7 (156 aa).

It belongs to the universal ribosomal protein uS7 family. In terms of assembly, part of the 30S ribosomal subunit. Contacts proteins S9 and S11.

Its function is as follows. One of the primary rRNA binding proteins, it binds directly to 16S rRNA where it nucleates assembly of the head domain of the 30S subunit. Is located at the subunit interface close to the decoding center, probably blocks exit of the E-site tRNA. The chain is Small ribosomal subunit protein uS7 from Leifsonia xyli subsp. xyli (strain CTCB07).